The following is a 473-amino-acid chain: Spliceosome-associated protein CWC27 homolog (473 aa).

S2 carries the N-acetylserine modification. The 156-residue stretch at 11-166 (TNGKVLLKTT…NSHKIRSCEV (156 aa)) folds into the PPIase cyclophilin-type domain. Positions 178-193 (EIKKPKKEKPEEEVKK) are enriched in basic and acidic residues. 3 disordered regions span residues 178–197 (EIKKPKKEKPEEEVKKLKPK), 203–383 (SLLS…TSRE), and 401–473 (IAET…KERR). Residues 206 to 230 (SFGEEAEEEEEEVNRVSQSMKGKSK) are a coiled coil. Residues 231 to 241 (SSHDLLKDDPH) show a composition bias toward basic and acidic residues. Residues 252 to 254 (RGD) carry the Cell attachment site motif. Residues 256 to 266 (AEDSDDDGEYE) show a composition bias toward acidic residues. Composition is skewed to basic and acidic residues over residues 267–348 (GAEH…KRSE) and 360–372 (EYRREKQKYEALR). A coiled-coil region spans residues 311–378 (VSRSEELRKE…EALRKQQAKT (68 aa)). S347 carries the phosphoserine modification. Acidic residues predominate over residues 405–419 (PENDISETEVEDDEG). 2 stretches are compositionally biased toward basic and acidic residues: residues 426–438 (QFEDKSRKVKDAS) and 458–473 (RREESKKLMREKKERR).

The protein belongs to the cyclophilin-type PPIase family. As to quaternary structure, part of the activated spliceosome B/catalytic step 1 spliceosome, one of the forms of the spliceosome which has a well-formed active site but still cannot catalyze the branching reaction and is composed at least of 52 proteins, the U2, U5 and U6 snRNAs and the pre-mRNA. Recruited during early steps of activated spliceosome B maturation, it is probably one of the first proteins released from this complex as he matures to the spliceosome C complex. Component of the minor spliceosome, which splices U12-type introns.

Its subcellular location is the nucleus. In terms of biological role, as part of the spliceosome, plays a role in pre-mRNA splicing. Probable inactive PPIase with no peptidyl-prolyl cis-trans isomerase activity. As a component of the minor spliceosome, involved in the splicing of U12-type introns in pre-mRNAs. This Bos taurus (Bovine) protein is Spliceosome-associated protein CWC27 homolog.